The primary structure comprises 307 residues: Mycothiol acetyltransferase (307 aa).

N-acetyltransferase domains are found at residues 12-157 (TRTD…PPLP) and 160-307 (VTLR…YQLG). Glutamate 43 is a 1D-myo-inositol 2-(L-cysteinylamino)-2-deoxy-alpha-D-glucopyranoside binding site. Acetyl-CoA is bound at residue 87 to 89 (LAV). 1D-myo-inositol 2-(L-cysteinylamino)-2-deoxy-alpha-D-glucopyranoside-binding residues include glutamate 187, lysine 227, and glutamate 239. Acetyl-CoA contacts are provided by residues 243 to 245 (LGV) and 250 to 256 (HGGGLGK). Position 278 (tyrosine 278) interacts with 1D-myo-inositol 2-(L-cysteinylamino)-2-deoxy-alpha-D-glucopyranoside.

Belongs to the acetyltransferase family. MshD subfamily. Monomer.

The enzyme catalyses 1D-myo-inositol 2-(L-cysteinylamino)-2-deoxy-alpha-D-glucopyranoside + acetyl-CoA = mycothiol + CoA + H(+). Catalyzes the transfer of acetyl from acetyl-CoA to desacetylmycothiol (Cys-GlcN-Ins) to form mycothiol. This chain is Mycothiol acetyltransferase, found in Salinispora tropica (strain ATCC BAA-916 / DSM 44818 / JCM 13857 / NBRC 105044 / CNB-440).